The sequence spans 648 residues: Rho GTPase-activating protein 25 (648 aa).

Residues 46 to 151 (RPIKVGWLKK…WVKFLRRVAG (106 aa)) form the PH domain. A Rho-GAP domain is found at 160 to 354 (QRLDETVAYE…MMIRDHEVLF (195 aa)). The disordered stretch occupies residues 356-559 (KSKDAPISPP…DLDSLQRTVQ (204 aa)). Residues serine 363, serine 396, and serine 403 each carry the phosphoserine modification. Residues 393 to 410 (RTDSFSNTASSPDATSPT) are compositionally biased toward polar residues. Residue threonine 407 is modified to Phosphothreonine. Positions 417 to 431 (QHQEDSGKAPRENPG) are enriched in basic and acidic residues. Composition is skewed to polar residues over residues 453 to 462 (SAFQGTTSSK) and 497 to 515 (DQRT…SQGN). Residue serine 537 is modified to Phosphoserine. Residues 540 to 641 (EAGSKNSGED…VKEFVKSMEK (102 aa)) adopt a coiled-coil conformation.

GTPase activator for the Rho-type GTPases by converting them to an inactive GDP-bound state. This is Rho GTPase-activating protein 25 (Arhgap25) from Mus musculus (Mouse).